Consider the following 310-residue polypeptide: Tryptophan 2,3-dioxygenase (310 aa).

Residues Met1–Ala39 form a disordered region. Substrate is bound by residues Phe79 to His83, Tyr141, and Arg145. His268 contacts heme. Thr282 is a substrate binding site.

This sequence belongs to the tryptophan 2,3-dioxygenase family. As to quaternary structure, homotetramer. Requires heme as cofactor.

It carries out the reaction L-tryptophan + O2 = N-formyl-L-kynurenine. It functions in the pathway amino-acid degradation; L-tryptophan degradation via kynurenine pathway; L-kynurenine from L-tryptophan: step 1/2. In terms of biological role, heme-dependent dioxygenase that catalyzes the oxidative cleavage of the L-tryptophan (L-Trp) pyrrole ring and converts L-tryptophan to N-formyl-L-kynurenine. Catalyzes the oxidative cleavage of the indole moiety. The polypeptide is Tryptophan 2,3-dioxygenase (Burkholderia multivorans (strain ATCC 17616 / 249)).